The sequence spans 883 residues: Phosphoenolpyruvate carboxylase (883 aa).

Active-site residues include H138 and K546.

Belongs to the PEPCase type 1 family. It depends on Mg(2+) as a cofactor.

It carries out the reaction oxaloacetate + phosphate = phosphoenolpyruvate + hydrogencarbonate. Functionally, forms oxaloacetate, a four-carbon dicarboxylic acid source for the tricarboxylic acid cycle. The sequence is that of Phosphoenolpyruvate carboxylase from Salmonella gallinarum (strain 287/91 / NCTC 13346).